The primary structure comprises 275 residues: 3-deoxy-manno-octulosonate cytidylyltransferase (275 aa).

This sequence belongs to the KdsB family.

The protein resides in the cytoplasm. It catalyses the reaction 3-deoxy-alpha-D-manno-oct-2-ulosonate + CTP = CMP-3-deoxy-beta-D-manno-octulosonate + diphosphate. Its pathway is nucleotide-sugar biosynthesis; CMP-3-deoxy-D-manno-octulosonate biosynthesis; CMP-3-deoxy-D-manno-octulosonate from 3-deoxy-D-manno-octulosonate and CTP: step 1/1. It participates in bacterial outer membrane biogenesis; lipopolysaccharide biosynthesis. Functionally, activates KDO (a required 8-carbon sugar) for incorporation into bacterial lipopolysaccharide in Gram-negative bacteria. The sequence is that of 3-deoxy-manno-octulosonate cytidylyltransferase from Psychrobacter sp. (strain PRwf-1).